A 168-amino-acid polypeptide reads, in one-letter code: Photosystem I assembly protein Ycf3 (168 aa).

TPR repeat units lie at residues 35–68 (AFTYYRDGMSAQSEGNYAEALQNYYEAMRLEMDP), 72–105 (SYILYNIGLIHTSNGEHTKALEYYFRALERNPFL), and 120–153 (GEQAIRQGDSEIAEAWFDQAAEYWKQAIALTPGN).

Belongs to the Ycf3 family.

Its subcellular location is the plastid. It is found in the chloroplast thylakoid membrane. In terms of biological role, essential for the assembly of the photosystem I (PSI) complex. May act as a chaperone-like factor to guide the assembly of the PSI subunits. This chain is Photosystem I assembly protein Ycf3, found in Pelargonium hortorum (Common geranium).